We begin with the raw amino-acid sequence, 261 residues long: MRRIVIKVGSALLSRGHEMAMDRMESLCRFIAELKQKGDEVILVTSAAVAAGYTALALDKRQLPNRQALAAIGQPLLMNLYHQTLAPLGILPAQMLLSAYDFDSRKRTENARNTIEVLLSHGVLPIINENDAVATKELDMLAVFGDNDRLSAHVAHYFSAEILLILSDIDGYYDKNPCEFPDAKIRRVVNFLTPEELEAEVSPNNAFATGGIVTKLQAADFLMKRGQKMFLANGFNLGDARSFLLEGIHCQGTLFVQGGES.

Lysine 7 contributes to the ATP binding site. The substrate site is built by serine 46, aspartate 131, and asparagine 147. Residues 167-168 (SD) and 209-215 (TGGIVTK) each bind ATP.

This sequence belongs to the glutamate 5-kinase family.

It is found in the cytoplasm. The enzyme catalyses L-glutamate + ATP = L-glutamyl 5-phosphate + ADP. Its pathway is amino-acid biosynthesis; L-proline biosynthesis; L-glutamate 5-semialdehyde from L-glutamate: step 1/2. Functionally, catalyzes the transfer of a phosphate group to glutamate to form L-glutamate 5-phosphate. The protein is Glutamate 5-kinase of Wolinella succinogenes (strain ATCC 29543 / DSM 1740 / CCUG 13145 / JCM 31913 / LMG 7466 / NCTC 11488 / FDC 602W) (Vibrio succinogenes).